We begin with the raw amino-acid sequence, 28 residues long: Kappa-buthitoxin-Tt2b (28 aa).

3 disulfides stabilise this stretch: cysteine 2/cysteine 24, cysteine 7/cysteine 20, and cysteine 11/cysteine 26.

As to expression, expressed by the venom gland.

The protein resides in the secreted. In terms of biological role, blocks potassium channels Shaker-IR (with inactivation domain removed) and hKv1.2/KCNA2. This chain is Kappa-buthitoxin-Tt2b, found in Tityus trivittatus (Argentinean scorpion).